Consider the following 268-residue polypeptide: MLGITVLAAILACASSCGDPTFPPNLSARVVGGEDAVPNSWPWQVSLQYLRDDTWRHTCGGSLITTSHVLTAAHCINTNLTYRVGLGKYNLTVEDEEGSVYAEVDTIYVHEKWNRLLLWNDIAIIKLAEPVELSDTIQVACIPEQDSLLPGDYPCYVTGWGRLWTNGPIAEVLQQGLQPIVNHTTCSRLDWWFIKVRETMVCAGGDGVISACNGDSGGPLNCPVEDGLWQVHGIVSFGSSRGCNTYKKPVVFTRVSAYIDWIKEKIQL.

An N-terminal signal peptide occupies residues 1 to 16; it reads MLGITVLAAILACASS. A propeptide spans 17–29 (activation peptide); sequence CGDPTFPPNLSAR. Intrachain disulfides connect Cys-17–Cys-141, Cys-59–Cys-75, Cys-155–Cys-222, Cys-186–Cys-202, and Cys-212–Cys-243. Asn-25 carries N-linked (GlcNAc...) asparagine glycosylation. Residues 30 to 267 enclose the Peptidase S1 domain; the sequence is VVGGEDAVPN…YIDWIKEKIQ (238 aa). Residue His-74 is the Charge relay system of the active site. N-linked (GlcNAc...) asparagine glycans are attached at residues Asn-79 and Asn-90. The active-site Charge relay system is Asp-121. A glycan (N-linked (GlcNAc...) asparagine) is linked at Asn-182. Ser-216 acts as the Charge relay system in catalysis.

This sequence belongs to the peptidase S1 family. Elastase subfamily.

The enzyme catalyses Preferential cleavage: Leu-|-Xaa, Tyr-|-Xaa, Phe-|-Xaa, Met-|-Xaa, Trp-|-Xaa, Gln-|-Xaa, Asn-|-Xaa.. Functionally, regulates activation and degradation of trypsinogens and procarboxypeptidases by targeting specific cleavage sites within their zymogen precursors. Has chymotrypsin-type protease activity and hypocalcemic activity. Cleaves TRY4 and TRY5 and thereby inhibits their autoactivation. This is Chymotrypsin-C (Ctrc) from Mus musculus (Mouse).